The primary structure comprises 415 residues: ATP-dependent Clp protease ATP-binding subunit ClpX (415 aa).

The ClpX-type ZB domain occupies M1–L53. The Zn(2+) site is built by C12, C15, C34, and C37. An ATP-binding site is contributed by P118–L125.

This sequence belongs to the ClpX chaperone family. In terms of assembly, component of the ClpX-ClpP complex. Forms a hexameric ring that, in the presence of ATP, binds to fourteen ClpP subunits assembled into a disk-like structure with a central cavity, resembling the structure of eukaryotic proteasomes.

ATP-dependent specificity component of the Clp protease. It directs the protease to specific substrates. Can perform chaperone functions in the absence of ClpP. The polypeptide is ATP-dependent Clp protease ATP-binding subunit ClpX (Treponema pallidum (strain Nichols)).